The primary structure comprises 360 residues: MSDIDQLNSSLLAEIAATNDEPALEAVRVAALGKKGSISELLKTLGAMTPEERQTRGAAINALKNAVTDAIAERKSVLKMAAVNARLKAETVDVSLPVRSSPAERGRIHPISQIVDEITAIFADMGFSIAEGPDIETDYYNFTALNFPEGHPAREMHDTFFFNPDENGERKVLRTHTSPVQVRTMEAQKPPIRIIIPGKTYRQDSDATHSPMFHQVEGLVIDKKANVANIRWVLEEFCKTFFEVDSVTMRFRPSFFPFTEPSFEVDIQCDRSGPIVKFGEGTDWMEILGCGMVHPNVLRYGGLDPDEYQGFAWGMGLDRIAMLKYGMPDLRDFFNADVRWMTHYGFRPLDMPTLFGGLSA.

Residue E260 participates in Mg(2+) binding.

This sequence belongs to the class-II aminoacyl-tRNA synthetase family. Phe-tRNA synthetase alpha subunit type 1 subfamily. Tetramer of two alpha and two beta subunits. The cofactor is Mg(2+).

The protein resides in the cytoplasm. The enzyme catalyses tRNA(Phe) + L-phenylalanine + ATP = L-phenylalanyl-tRNA(Phe) + AMP + diphosphate + H(+). The protein is Phenylalanine--tRNA ligase alpha subunit of Rhizobium etli (strain CIAT 652).